The primary structure comprises 589 residues: Guanylate-binding protein 2 (589 aa).

Residues 1–309 are GTPase domain (Globular); sequence MASEIHMSEP…GAISNGSLPC (309 aa). Residues 35–276 enclose the GB1/RHD3-type G domain; that stretch reads TQPVVVVAIV…FTSYILSYSS (242 aa). GTP is bound by residues 45–52, 181–182, and L245; these read GLYRTGKS and RD. At C586 the chain carries Cysteine methyl ester. C586 carries the S-geranylgeranyl cysteine lipid modification. Residues 587–589 constitute a propeptide, removed in mature form; the sequence is TIL.

Belongs to the TRAFAC class dynamin-like GTPase superfamily. GB1/RHD3 GTPase family. GB1 subfamily. In terms of assembly, homodimer; homodimerization occurs upon GTP-binding and is required for the association with membranous structures. Heterodimer with other family members, including GBP1, GBP3, GBP4 and GBP5. Isoprenylation is required for proper subcellular location.

Its subcellular location is the cytoplasmic vesicle membrane. The protein resides in the golgi apparatus membrane. It localises to the cytoplasm. It is found in the perinuclear region. It carries out the reaction GTP + H2O = GDP + phosphate + H(+). In terms of biological role, interferon (IFN)-inducible GTPase that plays important roles in innate immunity against a diverse range of bacterial, viral and protozoan pathogens. Hydrolyzes GTP to GMP in 2 consecutive cleavage reactions, but the major reaction product is GDP. Following infection, recruited to the pathogen-containing vacuoles or vacuole-escaped bacteria and acts as a positive regulator of inflammasome assembly by promoting the release of inflammasome ligands from bacteria. Acts by promoting lysis of pathogen-containing vacuoles, releasing pathogens into the cytosol. Following pathogen release in the cytosol, promotes recruitment of proteins that mediate bacterial cytolysis, such as Gm12250/Irgb10: this liberates ligands that are detected by inflammasomes, such as lipopolysaccharide (LPS) that activates the non-canonical CASP4/CASP11 inflammasome or double-stranded DNA (dsDNA) that activates the AIM2 inflammasome. Confers protection to the protozoan pathogen Toxoplasma gondii. Independently of its GTPase activity, acts as an inhibitor of various viruses infectivity by inhibiting FURIN-mediated maturation of viral envelope proteins. The sequence is that of Guanylate-binding protein 2 from Mus musculus (Mouse).